A 119-amino-acid polypeptide reads, in one-letter code: Large ribosomal subunit protein uL18 (119 aa).

The protein belongs to the universal ribosomal protein uL18 family. Part of the 50S ribosomal subunit; part of the 5S rRNA/L5/L18/L25 subcomplex. Contacts the 5S and 23S rRNAs.

Its function is as follows. This is one of the proteins that bind and probably mediate the attachment of the 5S RNA into the large ribosomal subunit, where it forms part of the central protuberance. The sequence is that of Large ribosomal subunit protein uL18 from Xylella fastidiosa (strain M23).